Consider the following 447-residue polypeptide: Methylenetetrahydrofolate--tRNA-(uracil-5-)-methyltransferase TrmFO (447 aa).

10 to 15 (GAGLAG) is a binding site for FAD.

It belongs to the MnmG family. TrmFO subfamily. FAD is required as a cofactor.

Its subcellular location is the cytoplasm. The catalysed reaction is uridine(54) in tRNA + (6R)-5,10-methylene-5,6,7,8-tetrahydrofolate + NADH + H(+) = 5-methyluridine(54) in tRNA + (6S)-5,6,7,8-tetrahydrofolate + NAD(+). It carries out the reaction uridine(54) in tRNA + (6R)-5,10-methylene-5,6,7,8-tetrahydrofolate + NADPH + H(+) = 5-methyluridine(54) in tRNA + (6S)-5,6,7,8-tetrahydrofolate + NADP(+). Catalyzes the folate-dependent formation of 5-methyl-uridine at position 54 (M-5-U54) in all tRNAs. The polypeptide is Methylenetetrahydrofolate--tRNA-(uracil-5-)-methyltransferase TrmFO (Symbiobacterium thermophilum (strain DSM 24528 / JCM 14929 / IAM 14863 / T)).